Here is a 366-residue protein sequence, read N- to C-terminus: Putative [LysW]-aminoadipate semialdehyde/glutamate semialdehyde transaminase (366 aa).

Pyridoxal 5'-phosphate is bound by residues glycine 90–threonine 91 and phenylalanine 117. Arginine 120 serves as a coordination point for substrate. Pyridoxal 5'-phosphate is bound at residue aspartate 202–glutamine 205. Lysine 230 carries the N6-(pyridoxal phosphate)lysine modification. Residue serine 254 coordinates substrate. Threonine 255 is a pyridoxal 5'-phosphate binding site.

The protein belongs to the class-III pyridoxal-phosphate-dependent aminotransferase family. LysJ subfamily. In terms of assembly, homodimer. Pyridoxal 5'-phosphate is required as a cofactor.

It localises to the cytoplasm. The catalysed reaction is [amino-group carrier protein]-C-terminal-gamma-(L-lysyl)-L-glutamate + 2-oxoglutarate = [amino-group carrier protein]-C-terminal-N-(1-carboxy-5-oxopentan-1-yl)-L-glutamine + L-glutamate. It carries out the reaction [amino-group carrier protein]-C-terminal-gamma-(L-ornithyl)-L-glutamate + 2-oxoglutarate = [amino-group carrier protein]-C-terminal-gamma-(L-glutamyl-5-semialdehyde)-L-glutamate + L-glutamate. Its pathway is amino-acid biosynthesis; L-lysine biosynthesis via AAA pathway; L-lysine from L-alpha-aminoadipate (Thermus route): step 4/5. It functions in the pathway amino-acid biosynthesis; L-arginine biosynthesis. Its function is as follows. Involved in both the arginine and lysine biosynthetic pathways. The sequence is that of Putative [LysW]-aminoadipate semialdehyde/glutamate semialdehyde transaminase from Pyrococcus furiosus (strain ATCC 43587 / DSM 3638 / JCM 8422 / Vc1).